A 520-amino-acid chain; its full sequence is Ribonuclease Y (520 aa).

A helical transmembrane segment spans residues 3-23; the sequence is IELAIIFIVLAAGAGFLIGNL. Residues 210 to 273 enclose the KH domain; sequence TVSVVALPSD…EVAKIALEKL (64 aa). An HD domain is found at 336–429; the sequence is VYQHSLEVAF…VQAADALSGA (94 aa).

This sequence belongs to the RNase Y family.

Its subcellular location is the cell membrane. Functionally, endoribonuclease that initiates mRNA decay. This Geobacter sulfurreducens (strain ATCC 51573 / DSM 12127 / PCA) protein is Ribonuclease Y.